The primary structure comprises 154 residues: Aspartate carbamoyltransferase regulatory chain (154 aa).

Zn(2+) contacts are provided by Cys-110, Cys-115, Cys-136, and Cys-139.

This sequence belongs to the PyrI family. Contains catalytic and regulatory chains. Zn(2+) serves as cofactor.

In terms of biological role, involved in allosteric regulation of aspartate carbamoyltransferase. The sequence is that of Aspartate carbamoyltransferase regulatory chain from Halobacterium salinarum (strain ATCC 700922 / JCM 11081 / NRC-1) (Halobacterium halobium).